We begin with the raw amino-acid sequence, 344 residues long: Angiopoietin-related protein 7 (344 aa).

The signal sequence occupies residues Met1–Pro26. A coiled-coil region spans residues Glu37 to Gln116. Asn56 carries an N-linked (GlcNAc...) asparagine glycan. Residues Gln120–Asp341 form the Fibrinogen C-terminal domain. Cysteines 129 and 160 form a disulfide. N-linked (GlcNAc...) asparagine glycosylation is found at Asn251 and Asn265. Cysteines 283 and 296 form a disulfide.

Homotetramer; disulfide-linked.

The protein localises to the secreted. Its function is as follows. Has a role in the formation and organization of the extracellular matrix. In the eye, it functions as a mediator of dexamethasone-induced matrix deposition in the trabecular meshwork, the tissue responsible for the outflow of the ocular aqueous humor and for the maintenance of intraocular pressure. Is a negative regulator of angiogenesis in the cornea, and plays a major role in maintaining corneal avascularity and transparency. This Bos taurus (Bovine) protein is Angiopoietin-related protein 7 (ANGPTL7).